A 232-amino-acid polypeptide reads, in one-letter code: Ribosome maturation protein SDO1 homolog (232 aa).

Belongs to the SDO1/SBDS family.

The chain is Ribosome maturation protein SDO1 homolog from Methanothermobacter thermautotrophicus (strain ATCC 29096 / DSM 1053 / JCM 10044 / NBRC 100330 / Delta H) (Methanobacterium thermoautotrophicum).